A 131-amino-acid chain; its full sequence is Cell cycle protein GpsB (131 aa).

Residues 39-76 (LDGIIRDYEAFTNEIDRLKEENTKLFSRVDELTKQLSV) adopt a coiled-coil conformation. Residues 111–131 (KLSDSSVDNHDDGNHSDVDQY) form a disordered region. Positions 117–131 (VDNHDDGNHSDVDQY) are enriched in basic and acidic residues.

The protein belongs to the GpsB family. In terms of assembly, forms polymers through the coiled coil domains. Interacts with PBP1, MreC and EzrA.

The protein localises to the cytoplasm. In terms of biological role, divisome component that associates with the complex late in its assembly, after the Z-ring is formed, and is dependent on DivIC and PBP2B for its recruitment to the divisome. Together with EzrA, is a key component of the system that regulates PBP1 localization during cell cycle progression. Its main role could be the removal of PBP1 from the cell pole after pole maturation is completed. Also contributes to the recruitment of PBP1 to the division complex. Not essential for septum formation. The chain is Cell cycle protein GpsB from Lacticaseibacillus casei (strain BL23) (Lactobacillus casei).